The sequence spans 202 residues: Orotate phosphoribosyltransferase (202 aa).

Residues K93 and 113–121 (EDIITTGGS) contribute to the 5-phospho-alpha-D-ribose 1-diphosphate site. Orotate-binding residues include T117 and R145.

This sequence belongs to the purine/pyrimidine phosphoribosyltransferase family. PyrE subfamily. In terms of assembly, homodimer. Mg(2+) serves as cofactor.

The enzyme catalyses orotidine 5'-phosphate + diphosphate = orotate + 5-phospho-alpha-D-ribose 1-diphosphate. It participates in pyrimidine metabolism; UMP biosynthesis via de novo pathway; UMP from orotate: step 1/2. Functionally, catalyzes the transfer of a ribosyl phosphate group from 5-phosphoribose 1-diphosphate to orotate, leading to the formation of orotidine monophosphate (OMP). This Campylobacter curvus (strain 525.92) protein is Orotate phosphoribosyltransferase.